Consider the following 401-residue polypeptide: Formate dehydrogenase (401 aa).

Substrate is bound by residues I123 and N147. Residues S148, 202-203, D222, 257-261, T283, D309, 333-336, and S381 contribute to the NAD(+) site; these read RI, PLHPE, and HISG.

Belongs to the D-isomer specific 2-hydroxyacid dehydrogenase family. FDH subfamily. Homodimer.

The protein localises to the cytoplasm. It catalyses the reaction formate + NAD(+) = CO2 + NADH. Catalyzes the NAD(+)-dependent oxidation of formate to carbon dioxide. Formate oxidation is the final step in the methanol oxidation pathway in methylotrophic microorganisms. Has a role in the detoxification of exogenous formate in non-methylotrophic organisms. The protein is Formate dehydrogenase of Pseudomonas sp. (strain 101) (Achromobacter parvulus T1).